The following is a 445-amino-acid chain: Argininosuccinate synthase (445 aa).

Residues 17 to 25 (AFSGGLDTS) and Ala43 contribute to the ATP site. Tyr99 provides a ligand contact to L-citrulline. Gly129 and Thr131 together coordinate ATP. Residues Thr131, Asn135, and Asp136 each coordinate L-aspartate. An L-citrulline-binding site is contributed by Asn135. Residue Asp136 participates in ATP binding. Positions 139 and 192 each coordinate L-citrulline. Asp194 provides a ligand contact to ATP. Residues Thr201, Glu203, and Glu280 each coordinate L-citrulline.

It belongs to the argininosuccinate synthase family. Type 2 subfamily. Homotetramer.

The protein localises to the cytoplasm. The catalysed reaction is L-citrulline + L-aspartate + ATP = 2-(N(omega)-L-arginino)succinate + AMP + diphosphate + H(+). The protein operates within amino-acid biosynthesis; L-arginine biosynthesis; L-arginine from L-ornithine and carbamoyl phosphate: step 2/3. The sequence is that of Argininosuccinate synthase (argG) from Burkholderia multivorans (strain ATCC 17616 / 249).